We begin with the raw amino-acid sequence, 143 residues long: Holo-[acyl-carrier-protein] synthase (143 aa).

Residues Asp-8 and Glu-62 each contribute to the Mg(2+) site.

This sequence belongs to the P-Pant transferase superfamily. AcpS family. The cofactor is Mg(2+).

It is found in the cytoplasm. The enzyme catalyses apo-[ACP] + CoA = holo-[ACP] + adenosine 3',5'-bisphosphate + H(+). In terms of biological role, transfers the 4'-phosphopantetheine moiety from coenzyme A to a Ser of acyl-carrier-protein. This Cupriavidus metallidurans (strain ATCC 43123 / DSM 2839 / NBRC 102507 / CH34) (Ralstonia metallidurans) protein is Holo-[acyl-carrier-protein] synthase.